We begin with the raw amino-acid sequence, 476 residues long: Argininosuccinate lyase (476 aa).

The segment covering 1-17 (MTDTGSSDTNTDTTGTS) has biased composition (low complexity). The tract at residues 1 to 22 (MTDTGSSDTNTDTTGTSKANTM) is disordered.

Belongs to the lyase 1 family. Argininosuccinate lyase subfamily.

It localises to the cytoplasm. The catalysed reaction is 2-(N(omega)-L-arginino)succinate = fumarate + L-arginine. Its pathway is amino-acid biosynthesis; L-arginine biosynthesis; L-arginine from L-ornithine and carbamoyl phosphate: step 3/3. In Jannaschia sp. (strain CCS1), this protein is Argininosuccinate lyase.